Here is a 175-residue protein sequence, read N- to C-terminus: Large ribosomal subunit protein uL10 (175 aa).

The protein belongs to the universal ribosomal protein uL10 family. In terms of assembly, part of the ribosomal stalk of the 50S ribosomal subunit. The N-terminus interacts with L11 and the large rRNA to form the base of the stalk. The C-terminus forms an elongated spine to which L12 dimers bind in a sequential fashion forming a multimeric L10(L12)X complex.

Functionally, forms part of the ribosomal stalk, playing a central role in the interaction of the ribosome with GTP-bound translation factors. This Mycobacterium sp. (strain KMS) protein is Large ribosomal subunit protein uL10.